We begin with the raw amino-acid sequence, 439 residues long: MGKNVVVLGTQWGDEGKGKIVDLLTDQAAAVVRYQGGHNAGHTLVVGGKKTVLHLIPSGILRENVLCLIGNGVVLSPAALIKEMGILEEEGVPVKERLRISPNCPLILPNHIALDQAREKKRGNAKIGTTGRGIGPAYEDKVARRAVRVADLVRGGAALEEKLQEMLELHNFQLTQFYGVEAVKFEDVLALCNEWREVLAPLVIDVTKVLHDYRKEGKAIMFEGAQGSLLDIDHGTYPYVTSSNTTAGGVSSGSGMGPLHLDYVLGITKAYTTRVGAGPFPTELHYDAATDTGDAIGRHLGTVGHEFGASTGRQRRCGWFDAEILRRSVEVNSLSGICLTKLDVLDGLDEIKICVGYEDVDSGCAGSSDAVSFESLKPIYETMPGWSESTVGLTSIDQLPANALAYVKRIEQLIECPIDIISTGPDRAETMILRHPFSA.

GTP-binding positions include 13–19 (GDEGKGK) and 41–43 (GHT). Catalysis depends on aspartate 14, which acts as the Proton acceptor. Residues aspartate 14 and glycine 41 each coordinate Mg(2+). IMP-binding positions include 14–17 (DEGK), 39–42 (NAGH), threonine 130, arginine 144, glutamine 226, threonine 241, and arginine 313. Histidine 42 (proton donor) is an active-site residue. 309-315 (ASTGRQR) lines the substrate pocket. Residues arginine 315, 341 to 343 (KLD), and 422 to 424 (STG) each bind GTP.

The protein belongs to the adenylosuccinate synthetase family. As to quaternary structure, homodimer. Requires Mg(2+) as cofactor.

It localises to the cytoplasm. It catalyses the reaction IMP + L-aspartate + GTP = N(6)-(1,2-dicarboxyethyl)-AMP + GDP + phosphate + 2 H(+). The protein operates within purine metabolism; AMP biosynthesis via de novo pathway; AMP from IMP: step 1/2. In terms of biological role, plays an important role in the de novo pathway of purine nucleotide biosynthesis. Catalyzes the first committed step in the biosynthesis of AMP from IMP. The polypeptide is Adenylosuccinate synthetase (Acinetobacter baylyi (strain ATCC 33305 / BD413 / ADP1)).